The chain runs to 21 residues: Fibrinogen beta chain (21 aa).

The span at 1-11 shows a compositional bias: acidic residues; the sequence is EFPTDYDEGED. Residues 1–21 form a disordered region; that stretch reads EFPTDYDEGEDDRPKVGLGAR. A Sulfotyrosine modification is found at tyrosine 6.

In terms of assembly, heterohexamer; disulfide linked. Contains 2 sets of 3 non-identical chains (alpha, beta and gamma). The 2 heterotrimers are in head to head conformation with the N-termini in a small central domain. In terms of processing, conversion of fibrinogen to fibrin is triggered by thrombin, which cleaves fibrinopeptides A and B from alpha and beta chains, and thus exposes the N-terminal polymerization sites responsible for the formation of the soft clot.

It is found in the secreted. In terms of biological role, cleaved by the protease thrombin to yield monomers which, together with fibrinogen alpha (FGA) and fibrinogen gamma (FGG), polymerize to form an insoluble fibrin matrix. Fibrin has a major function in hemostasis as one of the primary components of blood clots. In addition, functions during the early stages of wound repair to stabilize the lesion and guide cell migration during re-epithelialization. Was originally thought to be essential for platelet aggregation, based on in vitro studies using anticoagulated blood. However subsequent studies have shown that it is not absolutely required for thrombus formation in vivo. Enhances expression of SELP in activated platelets. Maternal fibrinogen is essential for successful pregnancy. Fibrin deposition is also associated with infection, where it protects against IFNG-mediated hemorrhage. May also facilitate the antibacterial immune response via both innate and T-cell mediated pathways. This Bison bonasus (European bison) protein is Fibrinogen beta chain (FGB).